Consider the following 205-residue polypeptide: MRSRLLLPVPHLPTIREMSEELSHGAAGQEPPASPSLDDYVRCICQLAQPTSVLDKVTAQSRPNRPSRPAWTREKRRQAESPGDSSLCVSSLQPTLPSPGTDNPLDWLFGKSQGEQADGRGRPNRTGSSDPWDVPRQMGKDTGRLCEARVPEHSLGRKPGPRHQTSDLKSWTSRKSCRALASVSSSRPSSILGTLYLHLPVIHEL.

2 stretches are compositionally biased toward polar residues: residues 55–64 (DKVTAQSRPN) and 83–101 (GDSS…SPGT). Residues 55–171 (DKVTAQSRPN…RHQTSDLKSW (117 aa)) form a disordered region. Over residues 138–155 (MGKDTGRLCEARVPEHSL) the composition is skewed to basic and acidic residues.

The protein resides in the cytoplasm. Its subcellular location is the peroxisome. It is found in the mitochondrion. Functionally, acts as a critical modulator of FOXO3-induced autophagy via increased cellular ROS. The chain is Protein DEPP1 (Depp1) from Mus musculus (Mouse).